Consider the following 231-residue polypeptide: NADH-ubiquinone oxidoreductase chain 4 (231 aa).

The next 7 helical transmembrane spans lie at 1 to 21 (PIAG…YGII), 34 to 54 (MFLP…LTCL), 63 to 85 (IAYS…TPWG), 89 to 111 (AMAL…NTTY), 128 to 148 (ILPM…ATPP), 169 to 189 (TIIL…HMFL), and 211 to 231 (LLMT…ELVI).

This sequence belongs to the complex I subunit 4 family.

The protein resides in the mitochondrion membrane. It carries out the reaction a ubiquinone + NADH + 5 H(+)(in) = a ubiquinol + NAD(+) + 4 H(+)(out). Its function is as follows. Core subunit of the mitochondrial membrane respiratory chain NADH dehydrogenase (Complex I) that is believed to belong to the minimal assembly required for catalysis. Complex I functions in the transfer of electrons from NADH to the respiratory chain. The immediate electron acceptor for the enzyme is believed to be ubiquinone. The chain is NADH-ubiquinone oxidoreductase chain 4 (MT-ND4) from Porthidium ophryomegas (Slender hognose viper).